We begin with the raw amino-acid sequence, 215 residues long: 3-demethoxyubiquinol 3-hydroxylase (215 aa).

The Fe cation site is built by Glu-64, Glu-94, His-97, Glu-146, Glu-178, and His-181.

The protein belongs to the COQ7 family. Fe cation serves as cofactor.

It localises to the cell membrane. It carries out the reaction a 5-methoxy-2-methyl-3-(all-trans-polyprenyl)benzene-1,4-diol + AH2 + O2 = a 3-demethylubiquinol + A + H2O. It participates in cofactor biosynthesis; ubiquinone biosynthesis. Catalyzes the hydroxylation of 2-nonaprenyl-3-methyl-6-methoxy-1,4-benzoquinol during ubiquinone biosynthesis. The protein is 3-demethoxyubiquinol 3-hydroxylase of Azotobacter vinelandii (strain DJ / ATCC BAA-1303).